We begin with the raw amino-acid sequence, 731 residues long: 1,4-alpha-glucan branching enzyme GlgB (731 aa).

Catalysis depends on D412, which acts as the Nucleophile. Residue E465 is the Proton donor of the active site.

It belongs to the glycosyl hydrolase 13 family. GlgB subfamily. In terms of assembly, monomer.

The enzyme catalyses Transfers a segment of a (1-&gt;4)-alpha-D-glucan chain to a primary hydroxy group in a similar glucan chain.. It participates in glycan biosynthesis; glycogen biosynthesis. Catalyzes the formation of the alpha-1,6-glucosidic linkages in glycogen by scission of a 1,4-alpha-linked oligosaccharide from growing alpha-1,4-glucan chains and the subsequent attachment of the oligosaccharide to the alpha-1,6 position. This Bordetella bronchiseptica (strain ATCC BAA-588 / NCTC 13252 / RB50) (Alcaligenes bronchisepticus) protein is 1,4-alpha-glucan branching enzyme GlgB.